Here is a 289-residue protein sequence, read N- to C-terminus: Ribosomal RNA small subunit methyltransferase A (289 aa).

Positions 21, 23, 48, 69, 94, and 120 each coordinate S-adenosyl-L-methionine.

The protein belongs to the class I-like SAM-binding methyltransferase superfamily. rRNA adenine N(6)-methyltransferase family. RsmA subfamily.

The protein localises to the cytoplasm. It carries out the reaction adenosine(1518)/adenosine(1519) in 16S rRNA + 4 S-adenosyl-L-methionine = N(6)-dimethyladenosine(1518)/N(6)-dimethyladenosine(1519) in 16S rRNA + 4 S-adenosyl-L-homocysteine + 4 H(+). In terms of biological role, specifically dimethylates two adjacent adenosines (A1518 and A1519) in the loop of a conserved hairpin near the 3'-end of 16S rRNA in the 30S particle. May play a critical role in biogenesis of 30S subunits. The polypeptide is Ribosomal RNA small subunit methyltransferase A (Actinobacillus pleuropneumoniae serotype 7 (strain AP76)).